A 180-amino-acid chain; its full sequence is MGGVLSYFRGLLGSREMRILILGLDGAGKTTILYRLQVGEVVTTIPTIGFNVEQVTYKNLKFQVWDLGGQTSIRPYWRCYYSNTDAIIYVVDSADRDRIGISKDELLYMLREEELAGAILVVLANKQDMDGCMTVAEVHHALGLENLKNRTFQIFKTSATKGEGLDQAMDWLSNTLQSRK.

A lipid anchor (N-myristoyl glycine) is attached at G2. Residues 23–30 (GLDGAGKT), 66–70 (DLGGQ), and 125–128 (NKQD) contribute to the GTP site.

It belongs to the small GTPase superfamily. Arf family.

GTP-binding protein involved in protein trafficking; may modulate vesicle budding and uncoating within the Golgi apparatus. This is ADP-ribosylation factor-like protein 1 (Arl1) from Drosophila melanogaster (Fruit fly).